We begin with the raw amino-acid sequence, 304 residues long: Voltage-dependent anion channel-forming protein YneE (304 aa).

4 helical membrane passes run 28 to 48, 50 to 70, 209 to 229, and 235 to 255; these read LLLN…YTML, IKFT…FLGF, AYTL…PFAL, and YMTP…DALA.

Belongs to the anion channel-forming bestrophin (TC 1.A.46) family.

Its subcellular location is the cell membrane. The chain is Voltage-dependent anion channel-forming protein YneE (yneE) from Salmonella typhi.